Consider the following 1140-residue polypeptide: uncharacterized protein (1140 aa).

Transmembrane regions (helical) follow at residues 8–28 (FLLF…SAFT) and 1098–1118 (IAIT…SGVV).

The protein to M.pneumoniae MPN_375 (in the N-terminal section), M.pneumoniae MPN_374 (in the central section) and M.pneumoniae MPN_373 (in the C-terminal section).

The protein localises to the cell membrane. This is an uncharacterized protein from Mycoplasma pneumoniae (strain ATCC 29342 / M129 / Subtype 1) (Mycoplasmoides pneumoniae).